A 385-amino-acid chain; its full sequence is MEALFCSEIPNNNIRSSINDLSSSSSYTWPMIMTSSSSSSSSPTIMNIENIPRCDWDLSLSAVVSSASTGSDAIGAIEFDPTGEIIATGGIARKIRSYRLSSLLESRDDHVTASESYICTPAKLSSLKWRPDFSGRVIGSGDYDGVVTEYDVEKQVPVSERDEHGGRRIWSVDYTLYNGSLIGASGSDDGTVQMWDPRNGGTLEETVRPGGGAAICSVEFDPFGGSSIAVGCADRNAYVYDIRRLVDPLIVLDGHTKTVTYARFMDSHTIVTGSTDGSLKQWDIDNGRRVVRTYRGHVNSRNFVGLSVWRHGGLVVSGSENNQVFVYDKRWEEPVWVCGLGHTNRFGSDRRFVSSVCLRQVDEDWCTLVAGGSDGALEIFSGKQS.

7 WD repeats span residues 69–108 (TGSD…ESRD), 119–160 (CTPA…PVSE), 163–205 (EHGG…TLEE), 210–250 (GGGA…DPLI), 254–292 (GHTK…RVVR), 298–337 (VNSR…PVWV), and 348–385 (SDRR…GKQS).

Interacts with UVR8. Interacts directly with DHU1.

The protein localises to the nucleus. Its subcellular location is the cytoplasm. It is found in the cytosol. Its function is as follows. Functions in association with RUP2 as repressor of UV-B-induced photomorphogenesis mediated by UVR8 and HY5, likely in coordination with DHU1. Plays a crucial negative feedback regulatory role downstream of UVR8-COP1 to inhibit UVR8 function, balance UV-B-specific responses and ensure normal plant growth. Is involved in the regulation of photoperiodic flowering and vegetative development. The chain is WD repeat-containing protein RUP1 from Arabidopsis thaliana (Mouse-ear cress).